A 132-amino-acid chain; its full sequence is Small ribosomal subunit protein uS9 (132 aa).

Residues 101–132 are disordered; sequence KRAGLLTRDPRMKERKKPGLKAARRSPQFSKR. The segment covering 113-132 has biased composition (basic residues); sequence KERKKPGLKAARRSPQFSKR.

The protein belongs to the universal ribosomal protein uS9 family.

The protein is Small ribosomal subunit protein uS9 of Staphylococcus aureus (strain USA300).